The primary structure comprises 223 residues: Protein disulfide-isomerase-like protein EhSep2 (223 aa).

A signal peptide spans 1–17 (MALRSLTLLCAAAGASA). The Thioredoxin domain occupies 18-125 (GAIELTPDNF…DELKKFAENE (108 aa)). Selenocysteine 47 is a non-standard amino acid (selenocysteine). Residues 155-201 (EKRTEMLETLKKELADAESTHEALLKELQATYKESMDKLEKLKEESA) are a coiled coil. Residues 201–223 (APKIKLLKAATPAPKAEGAKDEV) form a disordered region. The segment covering 203–216 (KIKLLKAATPAPKA) has biased composition (low complexity). A Prevents secretion from ER motif is present at residues 220–223 (KDEV).

It belongs to the protein disulfide isomerase family.

The protein resides in the endoplasmic reticulum lumen. This is Protein disulfide-isomerase-like protein EhSep2 (SEP2) from Emiliania huxleyi (Coccolithophore).